The primary structure comprises 106 residues: Cell division topological specificity factor (106 aa).

The protein belongs to the MinE family.

Its function is as follows. Prevents the cell division inhibition by proteins MinC and MinD at internal division sites while permitting inhibition at polar sites. This ensures cell division at the proper site by restricting the formation of a division septum at the midpoint of the long axis of the cell. The polypeptide is Cell division topological specificity factor (Prochlorococcus marinus (strain SARG / CCMP1375 / SS120)).